The chain runs to 309 residues: Homoserine kinase (309 aa).

91 to 101 (PIGSGLGSSAC) serves as a coordination point for ATP.

Belongs to the GHMP kinase family. Homoserine kinase subfamily.

The protein resides in the cytoplasm. It carries out the reaction L-homoserine + ATP = O-phospho-L-homoserine + ADP + H(+). It participates in amino-acid biosynthesis; L-threonine biosynthesis; L-threonine from L-aspartate: step 4/5. Functionally, catalyzes the ATP-dependent phosphorylation of L-homoserine to L-homoserine phosphate. In Photorhabdus laumondii subsp. laumondii (strain DSM 15139 / CIP 105565 / TT01) (Photorhabdus luminescens subsp. laumondii), this protein is Homoserine kinase.